The primary structure comprises 258 residues: NH(3)-dependent NAD(+) synthetase (258 aa).

34–41 (GLSGGIDS) serves as a coordination point for ATP. Asp40 contributes to the Mg(2+) binding site. Arg116 provides a ligand contact to deamido-NAD(+). ATP is bound at residue Thr136. Glu141 is a binding site for Mg(2+). Residues Lys165 and Ser187 each coordinate ATP.

It belongs to the NAD synthetase family. In terms of assembly, homodimer.

It carries out the reaction deamido-NAD(+) + NH4(+) + ATP = AMP + diphosphate + NAD(+) + H(+). It functions in the pathway cofactor biosynthesis; NAD(+) biosynthesis; NAD(+) from deamido-NAD(+) (ammonia route): step 1/1. In terms of biological role, catalyzes the ATP-dependent amidation of deamido-NAD to form NAD. Uses ammonia as a nitrogen source. This Fusobacterium nucleatum subsp. nucleatum (strain ATCC 25586 / DSM 15643 / BCRC 10681 / CIP 101130 / JCM 8532 / KCTC 2640 / LMG 13131 / VPI 4355) protein is NH(3)-dependent NAD(+) synthetase.